We begin with the raw amino-acid sequence, 899 residues long: Probable dipeptidyl-aminopeptidase B (899 aa).

Disordered regions lie at residues 1–37 (MARK…SDGS) and 51–84 (KITR…TENS). The Cytoplasmic segment spans residues 1–91 (MARKDKDNGP…ENSKRNRGSR (91 aa)). The segment covering 22 to 37 (SSASFSSTDSLSSDGS) has biased composition (low complexity). Positions 61–74 (NPYRDDDVELERGD) are enriched in basic and acidic residues. Residues 92 to 112 (LIWVVGLLCLGGWILAFVLFW) traverse the membrane as a helical; Signal-anchor for type II membrane protein segment. The Vacuolar segment spans residues 113-899 (GRRNSELSSS…QQGNSVLPVT (787 aa)). Asparagine 149, asparagine 194, asparagine 347, asparagine 409, asparagine 513, asparagine 638, and asparagine 643 each carry an N-linked (GlcNAc...) asparagine glycan. Residue serine 752 is the Charge relay system of the active site. The N-linked (GlcNAc...) asparagine glycan is linked to asparagine 811. Active-site charge relay system residues include aspartate 829 and histidine 862.

The protein belongs to the peptidase S9B family.

It localises to the vacuole membrane. It catalyses the reaction Release of an N-terminal dipeptide, Xaa-Yaa-|-Zaa-, from a polypeptide, preferentially when Yaa is Pro, provided Zaa is neither Pro nor hydroxyproline.. In terms of biological role, type IV dipeptidyl-peptidase which removes N-terminal dipeptides sequentially from polypeptides having unsubstituted N-termini provided that the penultimate residue is proline. This chain is Probable dipeptidyl-aminopeptidase B (dapB), found in Talaromyces marneffei (strain ATCC 18224 / CBS 334.59 / QM 7333) (Penicillium marneffei).